The primary structure comprises 389 residues: Phospho-N-acetylmuramoyl-pentapeptide-transferase (389 aa).

The next 10 helical transmembrane spans lie at 25 to 45, 73 to 93, 97 to 117, 135 to 155, 190 to 210, 222 to 242, 258 to 278, 286 to 306, 311 to 331, and 366 to 386; these read RAVM…PWVI, TMGG…WGDL, FIWI…VDDY, FWQS…VSEA, ISYP…IVGA, GLVI…AYVM, GAGE…AFLW, VFMG…VAVI, IVLF…MLQV, and QVVV…LSTL.

This sequence belongs to the glycosyltransferase 4 family. MraY subfamily. It depends on Mg(2+) as a cofactor.

The protein resides in the cell inner membrane. The catalysed reaction is UDP-N-acetyl-alpha-D-muramoyl-L-alanyl-gamma-D-glutamyl-meso-2,6-diaminopimeloyl-D-alanyl-D-alanine + di-trans,octa-cis-undecaprenyl phosphate = di-trans,octa-cis-undecaprenyl diphospho-N-acetyl-alpha-D-muramoyl-L-alanyl-D-glutamyl-meso-2,6-diaminopimeloyl-D-alanyl-D-alanine + UMP. The protein operates within cell wall biogenesis; peptidoglycan biosynthesis. Functionally, catalyzes the initial step of the lipid cycle reactions in the biosynthesis of the cell wall peptidoglycan: transfers peptidoglycan precursor phospho-MurNAc-pentapeptide from UDP-MurNAc-pentapeptide onto the lipid carrier undecaprenyl phosphate, yielding undecaprenyl-pyrophosphoryl-MurNAc-pentapeptide, known as lipid I. In Burkholderia multivorans (strain ATCC 17616 / 249), this protein is Phospho-N-acetylmuramoyl-pentapeptide-transferase.